The sequence spans 297 residues: uncharacterized protein (297 aa).

A run of 5 helical transmembrane segments spans residues 114-136, 150-170, 197-217, 227-247, and 269-289; these read YNRW…LSSG, LLYD…VFNV, MPIV…GVHL, AFTV…KAMI, and FINT…PGLL.

The protein belongs to the ThrE exporter (TC 2.A.79) family.

It is found in the cell inner membrane. This is an uncharacterized protein from Haemophilus influenzae (strain ATCC 51907 / DSM 11121 / KW20 / Rd).